The sequence spans 177 residues: Large ribosomal subunit protein uL6 (177 aa).

This sequence belongs to the universal ribosomal protein uL6 family. In terms of assembly, part of the 50S ribosomal subunit.

In terms of biological role, this protein binds to the 23S rRNA, and is important in its secondary structure. It is located near the subunit interface in the base of the L7/L12 stalk, and near the tRNA binding site of the peptidyltransferase center. The polypeptide is Large ribosomal subunit protein uL6 (Acinetobacter baumannii (strain SDF)).